Consider the following 217-residue polypeptide: MSKSKMIVRTKFIDRACHWTVVICFFLVALSGISFFFPTLQWLTQTFGTPQMGRILHPFFGIAIFVALMFMFVRFVHHNIPDKKDIPWLLNIVEVLKGNEHKVADVGKYNAGQKMMFWSIMSMIFVLLVTGVIIWRPYFAQYFPMQVVRYSLLIHAAAGIILIHAILIHMYMAFWVKGSIKGMIEGKVSRRWAKKHHPRWYREIEKAEAKKESEEGI.

Over 1-11 (MSKSKMIVRTK) the chain is Cytoplasmic. The helical transmembrane segment at 12–36 (FIDRACHWTVVICFFLVALSGISFF) threads the bilayer. A heme b-binding site is contributed by H18. At 37-52 (FPTLQWLTQTFGTPQM) the chain is on the periplasmic side. Residues 53–74 (GRILHPFFGIAIFVALMFMFVR) form a helical membrane-spanning segment. H57 lines the heme b pocket. The Cytoplasmic portion of the chain corresponds to 75 to 110 (FVHHNIPDKKDIPWLLNIVEVLKGNEHKVADVGKYN). Residues 111–134 (AGQKMMFWSIMSMIFVLLVTGVII) traverse the membrane as a helical segment. Topologically, residues 135–150 (WRPYFAQYFPMQVVRY) are periplasmic. A helical membrane pass occupies residues 151-175 (SLLIHAAAGIILIHAILIHMYMAFW). The heme b site is built by H155 and H169. H169 provides a ligand contact to a menaquinone. Residues 176–217 (VKGSIKGMIEGKVSRRWAKKHHPRWYREIEKAEAKKESEEGI) are Cytoplasmic-facing.

Belongs to the formate dehydrogenase gamma subunit family. Trimer of heterotrimers, consisting of subunits alpha, beta and gamma. Heme serves as cofactor.

The protein resides in the cell inner membrane. Formate dehydrogenase allows the bacterium to use formate as major electron donor during anaerobic respiration, when nitrate is used as electron acceptor. Subunit gamma is the cytochrome b556 component of the formate dehydrogenase-N, and also contains a menaquinone reduction site that receives electrons from the beta subunit (FdnH), through its hemes. Formate dehydrogenase-N is part of a system that generates proton motive force, together with the dissimilatory nitrate reductase (Nar). This is Formate dehydrogenase, nitrate-inducible, cytochrome b556(Fdn) subunit (fdnI) from Escherichia coli O157:H7.